Consider the following 414-residue polypeptide: Ena/VASP-like protein (414 aa).

The WH1 domain maps to 1–112 (MSEQSICQAR…NAMLFALNIM (112 aa)). Ser130 carries the post-translational modification Phosphoserine. The segment at 157 to 369 (ATGPILPPGH…SRVKPAGSVN (213 aa)) is disordered. Positions 179–204 (GPPPPPPPPVPPPPTGSTPPPPPPLP) are enriched in pro residues. The span at 217–228 (SASGLAAALAGA) shows a compositional bias: low complexity. Residues 220-240 (GLAAALAGAKLRRVQRPEDAS) are EVH2 block A. Positions 220–411 (GLAAALAGAK…DAIRQELSGI (192 aa)) are EVH2. The KLKR signature appears at 229-232 (KLRR). The span at 240 to 251 (SGGSSPSGTSKS) shows a compositional bias: low complexity. Residues Ser244 and Ser257 each carry the phosphoserine modification. An EVH2 block B region spans residues 263–280 (GGLMEEMNKLLAKRRKAA). The segment covering 297-318 (EDPSTSPSPGTRATSQPPNSSE) has biased composition (polar residues). Phosphoserine is present on residues Ser302, Ser304, Ser327, Ser329, Ser339, Ser347, Ser352, and Ser367. The span at 319–329 (AGRKPWERSNS) shows a compositional bias: basic and acidic residues. The required for interaction with ZDHHC17 stretch occupies residues 340 to 360 (RTPSVAKSPEAKSPLQSQPHS). Residues 377 to 411 (DLDRMKQEILEEVVRELHKVKEEIIDAIRQELSGI) are EVH2 block C.

Belongs to the Ena/VASP family. In terms of assembly, homotetramer. Binds to the SH3 domains of ABL1, LYN and SRC. Also binds to profilin, with preference for isoform IIa of PFN2, and the WW domain of APBB1/FE65. Binds to SEMA6A. Interacts, via the Pro-rich region, with the C-terminal SH3 domain of DNMBP. Interacts with RAPH1. Binds, via the EVH1 domain, the Pro-rich domain of Listeria monocytogenes actA. Binds, via the EVH1 domain, the Pro-rich domain of ZYX. Interacts with FYB1. Interacts with ZDHHC17. In terms of processing, phosphorylated by PKA; phosphorylation abolishes binding to SH3 domains of ABL and SRC. In terms of tissue distribution, highest expression in thymus and spleen (at protein level). Low levels in placenta, ovary, testis, fat and lung (at protein level). Isoform 1 and isoform 2 are expressed in cortical neurons and glial cells.

Its subcellular location is the cytoplasm. It localises to the cytoskeleton. It is found in the stress fiber. The protein localises to the cell projection. The protein resides in the lamellipodium. Functionally, ena/VASP proteins are actin-associated proteins involved in a range of processes dependent on cytoskeleton remodeling and cell polarity such as axon guidance and lamellipodial and filopodial dynamics in migrating cells. EVL enhances actin nucleation and polymerization. The polypeptide is Ena/VASP-like protein (Evl) (Mus musculus (Mouse)).